A 513-amino-acid polypeptide reads, in one-letter code: Putative thymidine phosphorylase (513 aa).

The protein belongs to the thymidine/pyrimidine-nucleoside phosphorylase family. Type 2 subfamily.

The catalysed reaction is thymidine + phosphate = 2-deoxy-alpha-D-ribose 1-phosphate + thymine. This is Putative thymidine phosphorylase from Rhodopseudomonas palustris (strain BisB18).